We begin with the raw amino-acid sequence, 481 residues long: Delta 4,5-hexuronate-2-O-sulfatase (481 aa).

Residue S64 is modified to 3-oxoalanine (Ser). C225, C226, H462, and H469 together coordinate Zn(2+). A disordered region spans residues 453–481 (VDADPRCRNHTPGYPSHEGPGAREILKRK). The segment covering 472-481 (PGAREILKRK) has biased composition (basic and acidic residues).

It belongs to the sulfatase family. The cofactor is Zn(2+). The conversion to 3-oxoalanine (also known as C-formylglycine, FGly), of a serine or cysteine residue in prokaryotes and of a cysteine residue in eukaryotes, is critical for catalytic activity.

Functionally, exosulfatase involved in the degradation of the glycosaminoglycans (GAGs) chondroitin sulfate (CS), dermatan sulfate (DS) and heparan sulfate (HS). 2-O-sulfatase active on unsaturated non-reducing end hexuronate units. Has a slight preference for HS-derived structures. GAG-specific sulfatases play a key role in the persistence of the major human gut symbiont B.thetaiotaomicron in the host gastrointestinal tract. The chain is Delta 4,5-hexuronate-2-O-sulfatase from Bacteroides thetaiotaomicron (strain ATCC 29148 / DSM 2079 / JCM 5827 / CCUG 10774 / NCTC 10582 / VPI-5482 / E50).